A 541-amino-acid polypeptide reads, in one-letter code: Atlastin (541 aa).

Residues 1–424 are Cytoplasmic-facing; that stretch reads MGGSAVQVIN…NIFKAARTPA (424 aa). In terms of domain architecture, GB1/RHD3-type G spans 35 to 284; it reads DRFVCVVSVA…LVPMLLAPDN (250 aa). The GDP site is built by Arg-48, Lys-49, Gly-50, Lys-51, and Ser-52. Residues Arg-48, Lys-49, Gly-50, Lys-51, Ser-52, and Phe-53 each contribute to the GTP site. Ser-52 contributes to the Mg(2+) binding site. Residue Asp-121 coordinates Mg(2+). Positions 192, 193, and 251 each coordinate GDP. Residues Arg-192, Asp-193, and Val-251 each contribute to the GTP site. The interval 322–413 is 3HB (three-helix bundle) domain; sequence MLVATAEANH…FTNYQAHNES (92 aa). Residues 414–422 are linker; that stretch reads KNIFKAART. A helical transmembrane segment spans residues 425–445; sequence VYFACAVIMYILSGIFGLVGL. The Lumenal segment spans residues 446 to 448; the sequence is YTF. Residues 449–469 traverse the membrane as a helical segment; sequence ANFCNLVMGVALLTLALWAYI. The Cytoplasmic segment spans residues 470–541; it reads RYSGELSDFG…NASNGKVKRS (72 aa). Thr-514 carries the phosphothreonine modification.

The protein belongs to the TRAFAC class dynamin-like GTPase superfamily. GB1/RHD3 GTPase family. GB1 subfamily. In terms of assembly, monomeric and homodimeric. The homodimer, transiently formed by two molecules on opposing membranes, is the active form mediating ER membrane fusion. Interacts with spas; interaction may regulate microtubule dynamics. As to expression, ubiquitously expressed.

The protein resides in the endoplasmic reticulum membrane. The protein localises to the golgi apparatus membrane. It catalyses the reaction GTP + H2O = GDP + phosphate + H(+). Membrane-anchored GTPase that mediates the GTP-dependent fusion of endoplasmic reticulum (ER) membranes, maintaining the continuous ER network. It facilitates the formation of three-way junctions where ER tubules intersect. Two atlastin-1 on neighboring ER tubules bind GTP and form loose homodimers through the GB1/RHD3-type G domains and 3HB regions. Upon GTP hydrolysis, the 3HB regions tighten, pulling the membranes together to drive their fusion. After fusion, the homodimer disassembles upon release of inorganic phosphate (Pi). Subsequently, GDP dissociates, resetting the monomers to a conformation ready for a new fusion cycle. May also regulate more or less directly Golgi biogenesis. May also regulate microtubule polymerization and Golgi biogenesis. Required for dopaminergic neurons survival and the growth of muscles and synapses at neuromuscular junctions. The polypeptide is Atlastin (atl) (Drosophila melanogaster (Fruit fly)).